Consider the following 463-residue polypeptide: Chaperone SurA (463 aa).

The first 25 residues, 1–25 (MTKPFSVVLASLLAITSTVSPLASA), serve as a signal peptide directing secretion. PpiC domains are found at residues 174 to 276 (GSQY…KLVE) and 289 to 388 (VTEY…QRVG). 2 disordered regions span residues 328 to 348 (QATAKESSEDTNSRGQGGDLG) and 432 to 463 (RTGDRADDNATAAPAKSADPAAPSPPPAKPTR). Positions 440–452 (NATAAPAKSADPA) are enriched in low complexity. Over residues 453–463 (APSPPPAKPTR) the composition is skewed to pro residues.

Its subcellular location is the periplasm. It carries out the reaction [protein]-peptidylproline (omega=180) = [protein]-peptidylproline (omega=0). Chaperone involved in the correct folding and assembly of outer membrane proteins. Recognizes specific patterns of aromatic residues and the orientation of their side chains, which are found more frequently in integral outer membrane proteins. May act in both early periplasmic and late outer membrane-associated steps of protein maturation. The polypeptide is Chaperone SurA (Xanthomonas euvesicatoria pv. vesicatoria (strain 85-10) (Xanthomonas campestris pv. vesicatoria)).